A 312-amino-acid chain; its full sequence is Tetraacyldisaccharide 4'-kinase (312 aa).

Residue 60–67 (IAGGSGKT) coordinates ATP.

The protein belongs to the LpxK family.

It carries out the reaction a lipid A disaccharide + ATP = a lipid IVA + ADP + H(+). It participates in glycolipid biosynthesis; lipid IV(A) biosynthesis; lipid IV(A) from (3R)-3-hydroxytetradecanoyl-[acyl-carrier-protein] and UDP-N-acetyl-alpha-D-glucosamine: step 6/6. In terms of biological role, transfers the gamma-phosphate of ATP to the 4'-position of a tetraacyldisaccharide 1-phosphate intermediate (termed DS-1-P) to form tetraacyldisaccharide 1,4'-bis-phosphate (lipid IVA). This chain is Tetraacyldisaccharide 4'-kinase, found in Helicobacter pylori (strain HPAG1).